The sequence spans 487 residues: GTPase Der (487 aa).

EngA-type G domains are found at residues 3-166 and 193-366; these read PVIA…PRDA and IKIA…QSAV. Residues 9 to 16, 56 to 60, 118 to 121, 199 to 206, 246 to 250, and 311 to 314 each bind GTP; these read GRPNVGKS, DTGGI, NKID, DTAGV, and NKWD. The region spanning 367–451 is the KH-like domain; sequence TRWPTSRLTQ…PIRIEYKGGE (85 aa). Residues 448 to 461 show a composition bias toward basic and acidic residues; the sequence is KGGENPYEGKKNTL. Residues 448–487 are disordered; it reads KGGENPYEGKKNTLTDRQVNKKRRLMSHHKKAEKKRRDKR. A compositionally biased stretch (basic residues) spans 467–487; sequence NKKRRLMSHHKKAEKKRRDKR.

It belongs to the TRAFAC class TrmE-Era-EngA-EngB-Septin-like GTPase superfamily. EngA (Der) GTPase family. Associates with the 50S ribosomal subunit.

Its function is as follows. GTPase that plays an essential role in the late steps of ribosome biogenesis. The chain is GTPase Der from Pseudomonas putida (strain ATCC 47054 / DSM 6125 / CFBP 8728 / NCIMB 11950 / KT2440).